Reading from the N-terminus, the 49-residue chain is uncharacterized protein (49 aa).

Residues 5–27 (ILEILSAFIRILFKLLYCWALFF) form a helical membrane-spanning segment.

The protein localises to the membrane. This is an uncharacterized protein from Saccharomyces cerevisiae (strain ATCC 204508 / S288c) (Baker's yeast).